The following is a 358-amino-acid chain: Aerobic magnesium-protoporphyrin IX monomethyl ester [oxidative] cyclase (358 aa).

This sequence belongs to the AcsF family. Requires Fe cation as cofactor.

It catalyses the reaction Mg-protoporphyrin IX 13-monomethyl ester + 3 NADPH + 3 O2 + 2 H(+) = 3,8-divinyl protochlorophyllide a + 3 NADP(+) + 5 H2O. Its pathway is porphyrin-containing compound metabolism; chlorophyll biosynthesis. Catalyzes the formation of the isocyclic ring in chlorophyll biosynthesis in aerobic conditions. Mediates the cyclase reaction, which results in the formation of divinylprotochlorophyllide (Pchlide) characteristic of all chlorophylls from magnesium-protoporphyrin IX 13-monomethyl ester (MgPMME). The protein is Aerobic magnesium-protoporphyrin IX monomethyl ester [oxidative] cyclase of Rubrivivax gelatinosus (Rhodocyclus gelatinosus).